A 60-amino-acid polypeptide reads, in one-letter code: UPF0434 protein NMC0623 (60 aa).

It belongs to the UPF0434 family.

In Neisseria meningitidis serogroup C / serotype 2a (strain ATCC 700532 / DSM 15464 / FAM18), this protein is UPF0434 protein NMC0623.